The following is a 451-amino-acid chain: MKTITTFENKKVLVLGLARSGEAAARLLAKLGAIVTVNDGKPFDENPTAQSLLEEGIKVVCGSHPLELLDEDFCYMIKNPGIPYNNPMVKKALEKQIPVLTEVELAYLVSESQLIGITGSNGKTTTTTMIAEVLNAGGQRGLLAGNIGFPASEVVQAADDKDILVMELSSFQLMGVKEFRPHIAVITNLMPTHLDYHGSFEDYVAAKWNIQNQMSSSDFLVLNFNQGISKELAKTTKATIVPFSTTEKVDGAYVQDKQLFYKGENIMLVDDIGVPGSHNVENALATIAVAKLAGISNQVIRETLSNFGGVKHRLQSLGKVHGISFYNDSKSTNILATQKALSGFDNTKVILIAGGLDRGNEFDELIPDITGLKHMVVLGESASRVKRAAQKAGVTYSDALDVRDAVHKAYEVAQQGDVILLSPANASWDMYKNFEVRGDEFIDTFESLRGE.

Residue 119–125 coordinates ATP; it reads GSNGKTT.

The protein belongs to the MurCDEF family.

It localises to the cytoplasm. The catalysed reaction is UDP-N-acetyl-alpha-D-muramoyl-L-alanine + D-glutamate + ATP = UDP-N-acetyl-alpha-D-muramoyl-L-alanyl-D-glutamate + ADP + phosphate + H(+). Its pathway is cell wall biogenesis; peptidoglycan biosynthesis. Its function is as follows. Cell wall formation. Catalyzes the addition of glutamate to the nucleotide precursor UDP-N-acetylmuramoyl-L-alanine (UMA). This is UDP-N-acetylmuramoylalanine--D-glutamate ligase from Streptococcus agalactiae serotype III (strain NEM316).